Reading from the N-terminus, the 168-residue chain is Lipoprotein signal peptidase (168 aa).

Transmembrane regions (helical) follow at residues 6–26, 70–90, and 98–118; these read VLAALKWYGVALLVILLDQIT, WFLALLAAGVSVLLIFWIAKL, and ALALALVLGGALGNLYDRMLL. Active-site residues include Asp-123 and Asp-141. The chain crosses the membrane as a helical span at residues 139 to 159; sequence IADSAICIGAALLVWDSLFGT.

This sequence belongs to the peptidase A8 family.

Its subcellular location is the cell inner membrane. The enzyme catalyses Release of signal peptides from bacterial membrane prolipoproteins. Hydrolyzes -Xaa-Yaa-Zaa-|-(S,diacylglyceryl)Cys-, in which Xaa is hydrophobic (preferably Leu), and Yaa (Ala or Ser) and Zaa (Gly or Ala) have small, neutral side chains.. It functions in the pathway protein modification; lipoprotein biosynthesis (signal peptide cleavage). Its function is as follows. This protein specifically catalyzes the removal of signal peptides from prolipoproteins. The chain is Lipoprotein signal peptidase from Teredinibacter turnerae (strain ATCC 39867 / T7901).